The primary structure comprises 316 residues: uncharacterized protein (316 aa).

4 BNR repeats span residues 62–73 (FISDSQGLKFSP), 124–135 (KISVDNGLTWSN), 196–207 (FISRDGGLTWRV), and 242–253 (YFSLDQGRTWNQ).

This is an uncharacterized protein from Saccharomyces cerevisiae (strain ATCC 204508 / S288c) (Baker's yeast).